The sequence spans 151 residues: Nucleoside diphosphate kinase (151 aa).

ATP contacts are provided by Lys9, Phe57, Arg86, Thr92, Arg103, and Asn113. His116 (pros-phosphohistidine intermediate) is an active-site residue.

Belongs to the NDK family. As to quaternary structure, homotetramer. Requires Mg(2+) as cofactor.

Its subcellular location is the cytoplasm. The catalysed reaction is a 2'-deoxyribonucleoside 5'-diphosphate + ATP = a 2'-deoxyribonucleoside 5'-triphosphate + ADP. It carries out the reaction a ribonucleoside 5'-diphosphate + ATP = a ribonucleoside 5'-triphosphate + ADP. Functionally, major role in the synthesis of nucleoside triphosphates other than ATP. The ATP gamma phosphate is transferred to the NDP beta phosphate via a ping-pong mechanism, using a phosphorylated active-site intermediate. This is Nucleoside diphosphate kinase from Chloroflexus aurantiacus (strain ATCC 29364 / DSM 637 / Y-400-fl).